Here is a 197-residue protein sequence, read N- to C-terminus: Peptide deformylase (197 aa).

Positions 106 and 148 each coordinate Fe cation. E149 is an active-site residue. Residue H152 coordinates Fe cation.

Belongs to the polypeptide deformylase family. Fe(2+) is required as a cofactor.

The catalysed reaction is N-terminal N-formyl-L-methionyl-[peptide] + H2O = N-terminal L-methionyl-[peptide] + formate. In terms of biological role, removes the formyl group from the N-terminal Met of newly synthesized proteins. Requires at least a dipeptide for an efficient rate of reaction. N-terminal L-methionine is a prerequisite for activity but the enzyme has broad specificity at other positions. In Mycolicibacterium gilvum (strain PYR-GCK) (Mycobacterium gilvum (strain PYR-GCK)), this protein is Peptide deformylase.